The chain runs to 331 residues: Small ribosomal subunit protein uS2 (331 aa).

It belongs to the universal ribosomal protein uS2 family.

The chain is Small ribosomal subunit protein uS2 from Rhodopseudomonas palustris (strain ATCC BAA-98 / CGA009).